We begin with the raw amino-acid sequence, 334 residues long: Malate dehydrogenase (334 aa).

Position 17–23 (17–23) interacts with NAD(+); it reads GAAGQIG. Substrate contacts are provided by Arg-98 and Arg-104. NAD(+) contacts are provided by residues Asn-111, Gln-118, and 135–137; that span reads VGN. Substrate is bound by residues Asn-137 and Arg-168. Catalysis depends on His-193, which acts as the Proton acceptor.

The protein belongs to the LDH/MDH superfamily. MDH type 2 family.

The enzyme catalyses (S)-malate + NAD(+) = oxaloacetate + NADH + H(+). Functionally, catalyzes the reversible oxidation of malate to oxaloacetate. The polypeptide is Malate dehydrogenase (Deinococcus geothermalis (strain DSM 11300 / CIP 105573 / AG-3a)).